The sequence spans 338 residues: Serine/threonine-protein kinase YabT (338 aa).

Positions 28–286 constitute a Protein kinase domain; the sequence is YTLRKQLGKG…PIKASPQPAT (259 aa). ATP-binding positions include 34–42 and lysine 55; that span reads LGKGANGIV. The active-site Proton acceptor is aspartate 148. The tract at residues 266-312 is disordered; the sequence is DAGQKAAQRKQPIKASPQPATRQRQQKPRQGKITKTRYTPKQKPAKS. The span at 289–309 shows a compositional bias: basic residues; that stretch reads RQQKPRQGKITKTRYTPKQKP.

It belongs to the protein kinase superfamily. Ser/Thr protein kinase family. Post-translationally, autophosphorylated.

The catalysed reaction is L-seryl-[protein] + ATP = O-phospho-L-seryl-[protein] + ADP + H(+). It carries out the reaction L-threonyl-[protein] + ATP = O-phospho-L-threonyl-[protein] + ADP + H(+). In terms of biological role, plays a role in the cell's commitment to sporulation; phosphorylates DNA replication initiation-control protein YabA. Deletion of this kinase delays entry into sporulation but does not affect final spore yield. Overexpression decreases biofilm formation; phosphorylation of YabA probably prevents biofilm formation. This Bacillus subtilis (strain 168) protein is Serine/threonine-protein kinase YabT (yabT).